The chain runs to 102 residues: Cuticle protein 10.9 (102 aa).

A Pyrrolidone carboxylic acid modification is found at Gln1. The tract at residues 1 to 45 is disordered; the sequence is QLAEQYPPHPYSFSYDATDETGARISTSESGDESNSKTGSYSYQT. The Chitin-binding type R&amp;R domain maps to 8–74; that stretch reads PHPYSFSYDA…SIDTNEPGTK (67 aa). The segment covering 36–45 has biased composition (polar residues); that stretch reads SKTGSYSYQT.

Functionally, component of the cuticle of the tick. Binds chitin. The polypeptide is Cuticle protein 10.9 (Ixodes ricinus (Common tick)).